A 164-amino-acid polypeptide reads, in one-letter code: MNPRRKSRLYLAVVVLIGIGLTTTLVLYALRSNIDLFYTPGEILQGKGERHEKPEIGQRLRIGGMVMPGSVKRDDKTLEMSFKVYDARGAVTVTYTGILPDLFREGQGVVAQGVFAEGNTINAKEVLAKHDEKYTPPEVKEAMKENHTRPAEAYNSTAAQGNAS.

At 1-8 (MNPRRKSR) the chain is on the cytoplasmic side. The chain crosses the membrane as a helical; Signal-anchor for type II membrane protein span at residues 9-29 (LYLAVVVLIGIGLTTTLVLYA). At 30-164 (LRSNIDLFYT…NSTAAQGNAS (135 aa)) the chain is on the periplasmic side. Residues H130 and Y134 each coordinate heme. The span at 131-150 (DEKYTPPEVKEAMKENHTRP) shows a compositional bias: basic and acidic residues. The segment at 131–164 (DEKYTPPEVKEAMKENHTRPAEAYNSTAAQGNAS) is disordered. The segment covering 154–164 (YNSTAAQGNAS) has biased composition (polar residues).

The protein belongs to the CcmE/CycJ family.

The protein resides in the cell inner membrane. In terms of biological role, heme chaperone required for the biogenesis of c-type cytochromes. Transiently binds heme delivered by CcmC and transfers the heme to apo-cytochromes in a process facilitated by CcmF and CcmH. This chain is Cytochrome c-type biogenesis protein CcmE, found in Yersinia enterocolitica serotype O:8 / biotype 1B (strain NCTC 13174 / 8081).